The primary structure comprises 441 residues: Inositol hexakisphosphate kinase 1 (441 aa).

The disordered stretch occupies residues 100–175; that stretch reads ETVEQDDTTE…MLDGNSGLSS (76 aa). A compositionally biased stretch (basic residues) spans 113-123; that stretch reads PRRKHSRRSLH. Over residues 137-149 the composition is skewed to low complexity; the sequence is SLSLETSESSQEA. Basic and acidic residues predominate over residues 150–160; that stretch reads KSPKVELHSHS. Position 151 is a phosphoserine (Ser-151). 220-228 serves as a coordination point for substrate; that stretch reads PCVLDLKMG. The disordered stretch occupies residues 370–392; sequence SSCGPSTSPSNTSPEAGPSSQPK. Over residues 372–391 the composition is skewed to polar residues; the sequence is CGPSTSPSNTSPEAGPSSQP.

It belongs to the inositol phosphokinase (IPK) family.

The protein localises to the cytoplasm. It localises to the nucleus. It carries out the reaction 1D-myo-inositol hexakisphosphate + ATP = 5-diphospho-1D-myo-inositol 1,2,3,4,6-pentakisphosphate + ADP. The enzyme catalyses 1-diphospho-1D-myo-inositol 2,3,4,5,6-pentakisphosphate + ATP + H(+) = 1,5-bis(diphospho)-1D-myo-inositol 2,3,4,6-tetrakisphosphate + ADP. In terms of biological role, converts inositol hexakisphosphate (InsP6) to diphosphoinositol pentakisphosphate (InsP7/PP-InsP5). Converts 1,3,4,5,6-pentakisphosphate (InsP5) to PP-InsP4. The polypeptide is Inositol hexakisphosphate kinase 1 (IP6K1) (Homo sapiens (Human)).